Here is a 28-residue protein sequence, read N- to C-terminus: Cyclotide vodo I1 (28 aa).

3 disulfides stabilise this stretch: Cys4-Cys18, Cys8-Cys20, and Cys13-Cys25.

In terms of processing, this is a cyclic peptide. Contains 3 disulfide bonds.

Functionally, probably participates in a plant defense mechanism. The polypeptide is Cyclotide vodo I1 (Viola odorata (Sweet violet)).